The sequence spans 423 residues: Putative competence-damage inducible protein (423 aa).

Belongs to the CinA family.

The protein is Putative competence-damage inducible protein of Streptococcus pyogenes serotype M49 (strain NZ131).